The following is a 979-amino-acid chain: Ankycorbin (979 aa).

At methionine 1 the chain carries N-acetylmethionine. A Phosphoserine modification is found at serine 11. 7 ANK repeats span residues 18 to 51, 52 to 81, 85 to 114, 118 to 147, 151 to 180, 184 to 213, and 217 to 247; these read KNDDRLLQAVENGDAEKVASLLGKKGASATKHDS, EGKTAFHLAAAKGHVECLKVMVTHGVDVTA, SGHSALHVAAKNGHPECIRKLLQYKSPAEN, SGKTALHYAAAQGCLQAVQLLCEHKSPINL, DGNIPLLVAVQNGHSEACHFLLDHGADVNS, NGRTALMLACETGSSNTVDALIKKGADLSL, and LGHNALHYSKLSENAGIQNLLLSKISQDADL. Residues 247 to 259 are compositionally biased toward basic and acidic residues; the sequence is LKTPTKPKQHDQV. Residues 247–299 are disordered; sequence LKTPTKPKQHDQVSKISSERSGTPKKRKAPPPPISPTQLSDVSSPRSITSTPL. At threonine 249 the chain carries Phosphothreonine. Residues 270–276 carry the Nuclear localization signal motif; that stretch reads PKKRKAP. Serine 281, serine 286, and serine 293 each carry phosphoserine. Polar residues predominate over residues 282–299; that stretch reads PTQLSDVSSPRSITSTPL. Threonine 295 and threonine 297 each carry phosphothreonine. Phosphoserine is present on residues serine 300, serine 304, serine 318, serine 327, serine 329, serine 340, serine 341, and serine 358. Positions 349 to 374 form a coiled coil; that stretch reads LVLLQAKVASLTLHNKELQDKLQAKS. Disordered stretches follow at residues 392 to 429 and 446 to 467; these read TQTDLAPSPGKASDIPSSDAKSSPPVEHPAGTSTTDND and LESSEAEKKQLQDELQSQRTDT. Residues 430-943 are a coiled coil; sequence VIIRQLQDSL…CKKHHQEVIS (514 aa). Positions 446–457 are enriched in basic and acidic residues; sequence LESSEAEKKQLQ. The segment covering 458–467 has biased composition (polar residues); the sequence is DELQSQRTDT. Phosphoserine is present on residues serine 513, serine 516, serine 667, serine 694, and serine 914.

In terms of assembly, interacts with PALLD. Associates with actin. However, does not bind F-actin directly. Highly expressed in testis, where it localizes to seminiferous tubules (at protein level). Expressed in ganglion cell layer and in Muller cell fibers of the retina (at protein level). In small intestine highly expressed at the apical and lateral borders of absorptive epithelia (at protein level). In liver highly expressed along the bile canaliculi (at protein level).

It localises to the cytoplasm. The protein resides in the cytoskeleton. It is found in the stress fiber. Its subcellular location is the cell cortex. The protein localises to the cell junction. It localises to the nucleus. Functionally, plays a role in actin regulation at the ectoplasmic specialization, a type of cell junction specific to testis. Important for establishment of sperm polarity and normal spermatid adhesion. May also promote integrity of Sertoli cell tight junctions at the blood-testis barrier. This chain is Ankycorbin (Rai14), found in Mus musculus (Mouse).